The primary structure comprises 1273 residues: Homeobox protein cut-like ceh-44 (1273 aa).

2 coiled-coil regions span residues 101 to 407 (LLKG…DGFK) and 440 to 468 (RQKN…KFED). 3 consecutive DNA-binding regions (CUT) follow at residues 591-681 (NVQA…LSPR), 832-919 (QAQY…KQPK), and 978-1065 (IDES…KEES). The tract at residues 1069 to 1100 (VKAKIESVPAPREAPRPVKRKHSSDTDDYDLN) is disordered. Residues 1103–1162 (KPIQRTVITDYQKDTLRFVFVNEQHPSNELCEQISLKLDMSLRTVQNWFHNHRTRSKARE) constitute a DNA-binding region (homeobox).

The protein belongs to the CUT homeobox family.

The protein localises to the nucleus. Probable DNA-binding regulatory protein involved in cell-fate specification. This chain is Homeobox protein cut-like ceh-44, found in Caenorhabditis elegans.